The chain runs to 352 residues: Long-chain-alcohol O-fatty-acyltransferase (352 aa).

The next 8 helical transmembrane spans lie at 13–33 (VWISAIAAACYCRFVPAVAPH), 34–54 (GGALRLLLLLPVVLLFIFLPL), 67–87 (LYLVWLANFKLLLFAFHLGPL), 128–148 (KVVLFVAKLVFFAGILKIYEF), 155–175 (FVISVLYCFHFYLGTEITLAA), 239–259 (VAGAMLVAFTVSGLMHEVFFF), 267–287 (SWEVTGFFVLHGVCTAVEMVV), and 303–323 (GALTVGFVMVTGGWLFLPQLV).

It belongs to the wax synthase family.

It localises to the microsome membrane. It carries out the reaction a long chain fatty alcohol + a fatty acyl-CoA = a wax ester + CoA. In terms of biological role, catalyzes the final step in the synthesis of long-chain linear esters (waxes). Has activity with both saturated and monounsaturated acyl-CoA ranging from 14 to 24 carbons in length, but C20:1 acyl-CoA is the preferred substrate. The sequence is that of Long-chain-alcohol O-fatty-acyltransferase from Simmondsia chinensis (Jojoba).